A 325-amino-acid chain; its full sequence is Glutarate 2-hydroxylase (325 aa).

Fe cation contacts are provided by H160, D162, and H292.

Belongs to the glutarate hydroxylase family. In terms of assembly, homotetramer. Fe(2+) serves as cofactor.

It catalyses the reaction glutarate + 2-oxoglutarate + O2 = (S)-2-hydroxyglutarate + succinate + CO2. It participates in amino-acid degradation. In terms of biological role, acts as an alpha-ketoglutarate-dependent dioxygenase catalyzing hydroxylation of glutarate (GA) to L-2-hydroxyglutarate (L2HG). Functions in a L-lysine degradation pathway that proceeds via cadaverine, glutarate and L-2-hydroxyglutarate. This is Glutarate 2-hydroxylase from Shigella boydii serotype 18 (strain CDC 3083-94 / BS512).